Here is a 158-residue protein sequence, read N- to C-terminus: uncharacterized protein (158 aa).

An FPG-type zinc finger spans residues 109–143 (RVHARTGLPCPVCGDTVREVSFADKSFQYCPTCQT).

This is an uncharacterized protein from Mycobacterium tuberculosis (strain ATCC 25618 / H37Rv).